The chain runs to 941 residues: Coiled-coil and C2 domain-containing protein 1A (941 aa).

At threonine 91 the chain carries Phosphothreonine. Disordered regions lie at residues 183-248 and 301-336; these read TINE…PCSP and SRLP…VPQP. A compositionally biased stretch (polar residues) spans 228–239; it reads APSTTAQTSAKP. Serine 247 carries the phosphoserine modification. Residues 303–318 are compositionally biased toward pro residues; it reads LPPPPDQLSPEPPLPA. Residues 338 to 384 adopt a coiled-coil conformation; it reads KNLLEALEQRMERYHVAAAQAKAKGDQRKARMHERIVKQYQDAIRAH. Positions 428–482 are disordered; the sequence is ANHEEGSDEEEEETPKKNTPAASTAQPKASPSRAPPSGPAPAGKAASKGTSTRAQ. Serine 434 is subject to Phosphoserine. Over residues 467–476 the composition is skewed to low complexity; it reads APAGKAASKG. Residues 475–508 are a coiled coil; that stretch reads KGTSTRAQQQLAFLEGRKKQLLQAALRAKQKNDV. Residues 628–762 form the C2 domain; that stretch reads RFEQRTFSVI…ETACEVHEIL (135 aa).

The protein belongs to the CC2D1 family. As to expression, strongly expressed in several brain areas including frontal cortex, cortex, mesencephalon, hippocampus, midbrain and hypothalamus. Also expressed in testis and at low levels in pituitary, liver and kidney. In brain the highest levels are detected in hippocampal pyramidal cells and raphe nuclei.

The protein resides in the cytoplasm. Its subcellular location is the nucleus. It is found in the cytoskeleton. It localises to the microtubule organizing center. The protein localises to the centrosome. Transcription factor that binds specifically to the DRE (dual repressor element) and represses 5-HT1A gene transcription though this element. Mediates HDAC-independent repression of HTR1A promoter. CAMK2G inhibits CC2D1a-induced repression of the HTR1A. May play a role in the altered regulation of 5-HT1A receptors associated with anxiety and major depression. Performs essential function in controlling functional maturation of synapses. The polypeptide is Coiled-coil and C2 domain-containing protein 1A (Cc2d1a) (Rattus norvegicus (Rat)).